Reading from the N-terminus, the 739-residue chain is MLKKQPLSPTDVRDSKVYRDWGLTDAEYQLLTDKVLQRLPNETETGLFSGMWSEHCSYKNSKPVLKKFWTQGEQVLEGPGEGAGIIDIGDGQAVVFKAESHNHPSAVEPYEGAATGVGGIIRDIFSMGARPIALLDSLRFGEPTDAHTKYLISQVVAGIGGYGNCIGIPTIGGDTVFDASYQKNPLVNAMCVGILDQADIQKGQATGIGNAVIYVGAKTGRDGINGASFASAEFNDANETQRSAVQVGDPFMEKLLMEACLEVIHEHRDVLIGIQDMGAAGLVSSSAEMASKAGSGLSLNLDLVPQRETGMTPFELMLSESQERMLLCVKAGAEAEIYQVFEKYGLDAVTIGKVTAGHQYQLFHHGKLVADVPVDALATKAPVYEREKKRPTRLNHQSHHQFMPRLVDATGTLKKMLQQPTIASKASLYGTYDSQVQTNTVVKPGSDAGVIRIRHTDKALAVTTDVNGRYLYLNPRVGGEIAVAEAARNIVASGGQPLGITDCLNYGNPEKPEQFYDLDESAMGIARACQLFNTPVISGNVSLNNESNGEAIYPTPMIGMVGLIKHQKDITTSDFKHAGDAVYVLGTTEADFNGSELQKMLTGTISGELFDFDLVTENRNQRLLLTAIQKGLVASAHDVSEGGLITTIAESCFPQNIGVELASDLPAANFFAETQSRFVISVTPAQQAAFESLMEPYVTYLGRTTATDRLHVQTADQAFDIKVSFAKQLWEGALPCLLK.

H55 is an active-site residue. The ATP site is built by Y58 and K97. E99 lines the Mg(2+) pocket. Substrate contacts are provided by residues 100 to 103 (SHNH) and R122. Catalysis depends on H101, which acts as the Proton acceptor. D123 is a binding site for Mg(2+). A substrate-binding site is contributed by Q246. Residue D276 coordinates Mg(2+). 320–322 (ESQ) contributes to the substrate binding site. Residues D502 and G539 each contribute to the ATP site. N540 is a Mg(2+) binding site. S542 lines the substrate pocket.

It belongs to the FGAMS family. Monomer. Part of the FGAM synthase complex composed of 1 PurL, 1 PurQ and 2 PurS subunits.

Its subcellular location is the cytoplasm. The catalysed reaction is N(2)-formyl-N(1)-(5-phospho-beta-D-ribosyl)glycinamide + L-glutamine + ATP + H2O = 2-formamido-N(1)-(5-O-phospho-beta-D-ribosyl)acetamidine + L-glutamate + ADP + phosphate + H(+). It participates in purine metabolism; IMP biosynthesis via de novo pathway; 5-amino-1-(5-phospho-D-ribosyl)imidazole from N(2)-formyl-N(1)-(5-phospho-D-ribosyl)glycinamide: step 1/2. Its function is as follows. Part of the phosphoribosylformylglycinamidine synthase complex involved in the purines biosynthetic pathway. Catalyzes the ATP-dependent conversion of formylglycinamide ribonucleotide (FGAR) and glutamine to yield formylglycinamidine ribonucleotide (FGAM) and glutamate. The FGAM synthase complex is composed of three subunits. PurQ produces an ammonia molecule by converting glutamine to glutamate. PurL transfers the ammonia molecule to FGAR to form FGAM in an ATP-dependent manner. PurS interacts with PurQ and PurL and is thought to assist in the transfer of the ammonia molecule from PurQ to PurL. This Lactiplantibacillus plantarum (strain ATCC BAA-793 / NCIMB 8826 / WCFS1) (Lactobacillus plantarum) protein is Phosphoribosylformylglycinamidine synthase subunit PurL.